Consider the following 481-residue polypeptide: UDP-glycosyltransferase 85A2 (481 aa).

UDP-alpha-D-glucose-binding positions include S303, 360–362 (CPQ), 377–385 (HCGWNSTLE), and 399–402 (FAEQ).

Belongs to the UDP-glycosyltransferase family. As to expression, expressed in roots, shoots, leaves and flowers.

The chain is UDP-glycosyltransferase 85A2 (UGT85A2) from Arabidopsis thaliana (Mouse-ear cress).